The chain runs to 204 residues: Proteasome subunit beta (204 aa).

Positions 1–8 (MDDKILEG) are cleaved as a propeptide — removed in mature form; by autocatalysis. The Nucleophile role is filled by Thr-9.

Belongs to the peptidase T1B family. The 20S proteasome core is composed of 14 alpha and 14 beta subunits that assemble into four stacked heptameric rings, resulting in a barrel-shaped structure. The two inner rings, each composed of seven catalytic beta subunits, are sandwiched by two outer rings, each composed of seven alpha subunits. The catalytic chamber with the active sites is on the inside of the barrel. Has a gated structure, the ends of the cylinder being occluded by the N-termini of the alpha-subunits. Is capped at one or both ends by the proteasome regulatory ATPase, PAN.

Its subcellular location is the cytoplasm. The catalysed reaction is Cleavage of peptide bonds with very broad specificity.. Its activity is regulated as follows. The formation of the proteasomal ATPase PAN-20S proteasome complex, via the docking of the C-termini of PAN into the intersubunit pockets in the alpha-rings, triggers opening of the gate for substrate entry. Interconversion between the open-gate and close-gate conformations leads to a dynamic regulation of the 20S proteasome proteolysis activity. Its function is as follows. Component of the proteasome core, a large protease complex with broad specificity involved in protein degradation. The protein is Proteasome subunit beta of Methanobrevibacter smithii (strain ATCC 35061 / DSM 861 / OCM 144 / PS).